The chain runs to 548 residues: Hydroxylamine reductase (548 aa).

Residues Cys3, Cys6, Cys15, and Cys21 each coordinate [4Fe-4S] cluster. The hybrid [4Fe-2O-2S] cluster site is built by His239, Glu263, Cys307, Cys401, Cys429, Cys454, Glu489, and Lys491. Cys401 bears the Cysteine persulfide mark.

This sequence belongs to the HCP family. It depends on [4Fe-4S] cluster as a cofactor. Hybrid [4Fe-2O-2S] cluster serves as cofactor.

It localises to the cytoplasm. The enzyme catalyses A + NH4(+) + H2O = hydroxylamine + AH2 + H(+). Catalyzes the reduction of hydroxylamine to form NH(3) and H(2)O. The chain is Hydroxylamine reductase from Desulfosudis oleivorans (strain DSM 6200 / JCM 39069 / Hxd3) (Desulfococcus oleovorans).